The sequence spans 299 residues: HTH-type transcriptional regulator CynR (299 aa).

The region spanning 1–58 is the HTH lysR-type domain; sequence MLSRHINYFLAVAEHGSFTRAASALHVSQPALSQQIRQLEESLGVPLFDRSGRTIRLT. The H-T-H motif DNA-binding region spans 18–37; sequence FTRAASALHVSQPALSQQIR.

This sequence belongs to the LysR transcriptional regulatory family.

It localises to the cytoplasm. Its function is as follows. Positively regulates the cynTSX operon, and negatively regulates its own transcription. Binds specifically to the cynR-cynTSX intergenic region. The chain is HTH-type transcriptional regulator CynR (cynR) from Escherichia coli (strain K12).